The primary structure comprises 221 residues: Probable endo-1,4-beta-xylanase B (221 aa).

The first 19 residues, methionine 1 to alanine 19, serve as a signal peptide directing secretion. Positions glutamine 33–serine 221 constitute a GH11 domain. Glutamate 117 (nucleophile) is an active-site residue. The Proton donor role is filled by glutamate 208.

It belongs to the glycosyl hydrolase 11 (cellulase G) family.

Its subcellular location is the secreted. The catalysed reaction is Endohydrolysis of (1-&gt;4)-beta-D-xylosidic linkages in xylans.. Its pathway is glycan degradation; xylan degradation. Its function is as follows. Endo-1,4-beta-xylanase involved in the hydrolysis of xylan, a major structural heterogeneous polysaccharide found in plant biomass representing the second most abundant polysaccharide in the biosphere, after cellulose. This chain is Probable endo-1,4-beta-xylanase B (xlnB), found in Aspergillus clavatus (strain ATCC 1007 / CBS 513.65 / DSM 816 / NCTC 3887 / NRRL 1 / QM 1276 / 107).